Reading from the N-terminus, the 259-residue chain is 5'-nucleotidase SurE (259 aa).

The a divalent metal cation site is built by Asp-10, Asp-11, Ser-41, and Asn-96.

This sequence belongs to the SurE nucleotidase family. A divalent metal cation is required as a cofactor.

It localises to the cytoplasm. The catalysed reaction is a ribonucleoside 5'-phosphate + H2O = a ribonucleoside + phosphate. Its function is as follows. Nucleotidase that shows phosphatase activity on nucleoside 5'-monophosphates. This is 5'-nucleotidase SurE from Wolinella succinogenes (strain ATCC 29543 / DSM 1740 / CCUG 13145 / JCM 31913 / LMG 7466 / NCTC 11488 / FDC 602W) (Vibrio succinogenes).